A 154-amino-acid chain; its full sequence is MLNKRTTEVYALGQHISMSAHKARRVIDQIRGRSYEETLMILELMPYRACYPIFKLVYSAAANASSNMGSNEANLVISKAEVNKGTIMKRLKPRARGRSFAIQKPTCHITIVMKDISLDEYIDTDSIAWSQNKKKDTTMSYYDMYSNGGTWDKK.

It belongs to the universal ribosomal protein uL22 family. As to quaternary structure, part of the 50S ribosomal subunit.

Its subcellular location is the plastid. It is found in the chloroplast. This protein binds specifically to 23S rRNA. In terms of biological role, the globular domain of the protein is located near the polypeptide exit tunnel on the outside of the subunit, while an extended beta-hairpin is found that lines the wall of the exit tunnel in the center of the 70S ribosome. The chain is Large ribosomal subunit protein uL22c (rpl22) from Helianthus annuus (Common sunflower).